Consider the following 212-residue polypeptide: Ribonuclease HII (212 aa).

The 190-residue stretch at Gly-22–Thr-211 folds into the RNase H type-2 domain. The a divalent metal cation site is built by Asp-28, Glu-29, and Asp-120.

The protein belongs to the RNase HII family. Mn(2+) serves as cofactor. The cofactor is Mg(2+).

Its subcellular location is the cytoplasm. The enzyme catalyses Endonucleolytic cleavage to 5'-phosphomonoester.. Functionally, endonuclease that specifically degrades the RNA of RNA-DNA hybrids. The polypeptide is Ribonuclease HII (Shewanella frigidimarina (strain NCIMB 400)).